The chain runs to 372 residues: Alanine dehydrogenase (372 aa).

Substrate is bound by residues Arg15 and Lys75. His96 serves as the catalytic Proton donor/acceptor. Residues Ser134, 178–179, Asp198, Ser220, 239–240, 266–269, Arg279, and 298–301 each bind NAD(+); these read TA, VL, IAID, and VANM. The active-site Proton donor/acceptor is Asp269.

This sequence belongs to the AlaDH/PNT family. In terms of assembly, homohexamer.

The protein localises to the cytoplasm. It carries out the reaction L-alanine + NAD(+) + H2O = pyruvate + NH4(+) + NADH + H(+). It functions in the pathway amino-acid degradation; L-alanine degradation via dehydrogenase pathway; NH(3) and pyruvate from L-alanine: step 1/1. Its function is as follows. Catalyzes the reversible reductive amination of pyruvate to L-alanine. A key factor in the assimilation of L-alanine as an energy source via the tricarboxylic acid cycle during sporulation. The sequence is that of Alanine dehydrogenase (ald) from Geobacillus stearothermophilus (Bacillus stearothermophilus).